Here is an 830-residue protein sequence, read N- to C-terminus: Probable mixed-linked glucan synthase 7 (830 aa).

The next 2 membrane-spanning stretches (helical) occupy residues L61 to A81 and A98 to L118. Residue D186 is part of the active site. Positions E251 to R279 form a coiled coil. 2 residues coordinate substrate: D367 and D369. The active site involves D529. Helical transmembrane passes span L613–W633, T638–L658, F676–V696, A735–G755, L776–M796, and P805–L825.

Belongs to the glycosyltransferase 2 family. Plant cellulose synthase-like F subfamily. Expressed in mature pollen.

The protein resides in the golgi apparatus membrane. Its function is as follows. May catalyze both beta-1,3 and beta-1,4 glycosidic linkage on beta-D-glucan. Essential for (1,3;1,4)-beta-D-glucans synthesis in grasses and cereals (Poaceae). The mixed-linked glucans (which are not present in walls of dicotyledons or most other monocotyledonous plants) are particularly important constituents of the walls of the starchy endosperm and aleurone cells of cereal grains such as oats, wheat, rice and barley. They can account for up to 70% by weight of the wall. The polypeptide is Probable mixed-linked glucan synthase 7 (CSLF7) (Oryza sativa subsp. japonica (Rice)).